Reading from the N-terminus, the 185-residue chain is UPF0397 protein lhv_0999 (185 aa).

The next 5 helical transmembrane spans lie at 11–31, 45–65, 72–92, 111–131, and 145–165; these read VVAM…TSIP, FLAL…GFIG, IMYG…GLII, ILLF…VVAP, and VFVQ…VVGT.

Belongs to the UPF0397 family.

The protein localises to the cell membrane. This is UPF0397 protein lhv_0999 from Lactobacillus helveticus (strain DPC 4571).